The primary structure comprises 274 residues: Putative phosphoenolpyruvate synthase regulatory protein (274 aa).

An ADP-binding site is contributed by 154-161; the sequence is AVSRSGKT.

It belongs to the pyruvate, phosphate/water dikinase regulatory protein family. PSRP subfamily.

It carries out the reaction [pyruvate, water dikinase] + ADP = [pyruvate, water dikinase]-phosphate + AMP + H(+). It catalyses the reaction [pyruvate, water dikinase]-phosphate + phosphate + H(+) = [pyruvate, water dikinase] + diphosphate. In terms of biological role, bifunctional serine/threonine kinase and phosphorylase involved in the regulation of the phosphoenolpyruvate synthase (PEPS) by catalyzing its phosphorylation/dephosphorylation. The sequence is that of Putative phosphoenolpyruvate synthase regulatory protein from Alkalilimnicola ehrlichii (strain ATCC BAA-1101 / DSM 17681 / MLHE-1).